Reading from the N-terminus, the 325-residue chain is H-2 class I histocompatibility antigen, Q10 alpha chain (325 aa).

A signal peptide spans 1-24; sequence MGAMAPRTLLLLLAAALAPTQTQA. The interval 25–114 is alpha-1; that stretch reads GSHSMRYFET…LLGYYNQSES (90 aa). The Extracellular portion of the chain corresponds to 25 to 310; it reads GSHSMRYFET…PPSTDSIMSH (286 aa). An N-linked (GlcNAc...) asparagine glycan is attached at Asn-110. Positions 115–206 are alpha-2; sequence GSHTIQWMYG…ELGKETLLRT (92 aa). 2 disulfides stabilise this stretch: Cys-125/Cys-188 and Cys-227/Cys-283. The interval 207 to 298 is alpha-3; it reads DPPKTHVTHH…GLPEPLTLRW (92 aa). An Ig-like C1-type domain is found at 209-297; sequence PKTHVTHHPG…EGLPEPLTLR (89 aa). N-linked (GlcNAc...) asparagine glycosylation occurs at Asn-280. Residues 299 to 310 form a connecting peptide region; it reads EPPPSTDSIMSH. Residues 311 to 324 form a helical membrane-spanning segment; it reads IADLLWPSLKLWWY.

This sequence belongs to the MHC class I family. As to quaternary structure, heterodimer of an alpha chain and a beta chain (beta-2-microglobulin).

Its subcellular location is the membrane. Its function is as follows. Involved in the presentation of foreign antigens to the immune system. This chain is H-2 class I histocompatibility antigen, Q10 alpha chain (H2-Q10), found in Mus musculus (Mouse).